The chain runs to 383 residues: Succinyl-diaminopimelate desuccinylase (383 aa).

His73 contributes to the Zn(2+) binding site. The active site involves Asp75. Position 107 (Asp107) interacts with Zn(2+). The active-site Proton acceptor is the Glu141. The Zn(2+) site is built by Glu142, Glu170, and His356.

This sequence belongs to the peptidase M20A family. DapE subfamily. In terms of assembly, homodimer. Zn(2+) is required as a cofactor. It depends on Co(2+) as a cofactor.

The catalysed reaction is N-succinyl-(2S,6S)-2,6-diaminopimelate + H2O = (2S,6S)-2,6-diaminopimelate + succinate. It participates in amino-acid biosynthesis; L-lysine biosynthesis via DAP pathway; LL-2,6-diaminopimelate from (S)-tetrahydrodipicolinate (succinylase route): step 3/3. In terms of biological role, catalyzes the hydrolysis of N-succinyl-L,L-diaminopimelic acid (SDAP), forming succinate and LL-2,6-diaminopimelate (DAP), an intermediate involved in the bacterial biosynthesis of lysine and meso-diaminopimelic acid, an essential component of bacterial cell walls. The polypeptide is Succinyl-diaminopimelate desuccinylase (Pseudomonas putida (strain ATCC 700007 / DSM 6899 / JCM 31910 / BCRC 17059 / LMG 24140 / F1)).